The primary structure comprises 584 residues: uncharacterized protein (584 aa).

Residues 15-35 (FIFFVLVFFICIIFGCIYESL) form a helical membrane-spanning segment. Composition is skewed to polar residues over residues 184–194 (DVSTENSYTHN) and 204–225 (GKRTYNNQSNNNLPYDNSSYNI). Residues 184 to 226 (DVSTENSYTHNNSRDDEPQNGKRTYNNQSNNNLPYDNSSYNIS) are disordered. 2 coiled-coil regions span residues 267–319 (DNYP…DNYP) and 436–477 (RDNH…HYKR).

It localises to the membrane. This is an uncharacterized protein from Plasmodium falciparum (isolate 3D7).